Here is a 748-residue protein sequence, read N- to C-terminus: Catalase-peroxidase (748 aa).

Polar residues predominate over residues M1–R16. The disordered stretch occupies residues M1–D43. The segment at residues W113–Y238 is a cross-link (tryptophyl-tyrosyl-methioninium (Trp-Tyr) (with M-264)). Residue H114 is the Proton acceptor of the active site. Positions Y238–M264 form a cross-link, tryptophyl-tyrosyl-methioninium (Tyr-Met) (with W-113). H279 contributes to the heme b binding site.

This sequence belongs to the peroxidase family. Peroxidase/catalase subfamily. In terms of assembly, homodimer or homotetramer. It depends on heme b as a cofactor. Post-translationally, formation of the three residue Trp-Tyr-Met cross-link is important for the catalase, but not the peroxidase activity of the enzyme.

It carries out the reaction H2O2 + AH2 = A + 2 H2O. It catalyses the reaction 2 H2O2 = O2 + 2 H2O. In terms of biological role, bifunctional enzyme with both catalase and broad-spectrum peroxidase activity. This Mycolicibacterium paratuberculosis (strain ATCC BAA-968 / K-10) (Mycobacterium paratuberculosis) protein is Catalase-peroxidase.